A 344-amino-acid polypeptide reads, in one-letter code: Cycloartenol-C-24-methyltransferase 1 (344 aa).

It belongs to the class I-like SAM-binding methyltransferase superfamily. Erg6/SMT family.

It catalyses the reaction zymosterol + S-adenosyl-L-methionine = fecosterol + S-adenosyl-L-homocysteine + H(+). It participates in steroid biosynthesis; sterol biosynthesis. In terms of biological role, catalyzes the methyl transfer from S-adenosyl-methionine to the C-24 of cycloartenol to form 24-methylene cycloartenol. This chain is Cycloartenol-C-24-methyltransferase 1 (Smt1-1), found in Oryza sativa subsp. japonica (Rice).